A 660-amino-acid polypeptide reads, in one-letter code: MQTHNFLCIISVILGCSAQFYVIDDRIGLGREFDGIGGLSGGGATSRLLVNYEEPYRSQILDYLFKPNFGASLHILKVEIGGDAQTTDGTEPSHMHSKDEGNFFRGYEWWLMKEAKKRNPNIKLIGLPWAFPGWVGYGTQWPYFFPNVTANYVITWVMGAKQHHNLDIDYIGIWNEKAFDPTYIKVLRDALDRAGFTNIGIIAADGDWSIASAMLDDPYLNDAVEVIGVHYPGTNTVKEALLTERKLWSSEDYSTYNDDIGAGCWARILNQNYVNGKMTSTISWNVIASYYENLSFGRDGLMTAEEPWSGHYIVESPIWMTAHTTQFTQPGWFYLQTVGKLNHGGSYVALTDRKGNLTIIIETMTHEHSQCIRPPLPHFDVSPQIATFELKGSFAHLADLQVWYSKLDFKSGNGTLFKQLRPIRAHNGLLSLKLDVDEVFTITTVTTAQRGFYPEPPKSCPFPKNYTDDFTIDNPPFSEAPYFADQTGVFEYFRNTTDNSSHAFTLRQVVTERPVAWAKDADQTISIIGDYSWSDVNVSCDVFIETPKTGGVFLAARVDQGGESVRQAKGVFYWIYANGTYRVTNDIGGKRVLAEGLSGTKAGVWYTLTLSVKGYFATGSLNGFPLWKNAAVLEPKSGWAALGTLSFEYAQFDNFNVIAG.

Positions 1–18 (MQTHNFLCIISVILGCSA) are cleaved as a signal peptide. Substrate is bound by residues Thr87 and Trp129. An N-linked (GlcNAc...) asparagine glycan is attached at Asn147. Residue Asn175 participates in substrate binding. Glu176 functions as the Proton donor/acceptor in the catalytic mechanism. The active-site Nucleophile is Glu251. Cysteines 264 and 371 form a disulfide. N-linked (GlcNAc...) asparagine glycans are attached at residues Asn293 and Asn356. A substrate-binding site is contributed by Arg373. N-linked (GlcNAc...) asparagine glycans are attached at residues Asn413, Asn465, Asn495, Asn499, Asn537, and Asn578.

This sequence belongs to the glycosyl hydrolase 59 family.

Its subcellular location is the lysosome. It catalyses the reaction a beta-D-galactosyl-(1&lt;-&gt;1')-N-acylsphing-4-enine + H2O = an N-acylsphing-4-enine + D-galactose. It carries out the reaction beta-D-galactosyl-(1&lt;-&gt;1)-sphing-4-enine + H2O = sphing-4-enine + D-galactose. The enzyme catalyses a D-galactosylceramide + H2O = an N-acyl-sphingoid base + D-galactose. In terms of biological role, hydrolyzes the galactose ester bonds of glycolipids such as galactosylceramide and galactosylsphingosine. The chain is Galactocerebrosidase from Danio rerio (Zebrafish).